A 337-amino-acid chain; its full sequence is MHSLPVNLVLTVLTVFLTSPAQVIGYRPYPPKTNGSDQIFDASKKFEGSSNLVRLRYHMGPVLTNNITVHPIWYGTWQKSQKKIIREFINSISAVGSKHPSVSGWWKTVQLYTDQTGSNITGTVRLGEEKNDRFYSHGKSLTRLSIQSVIKSAVTSRSRPLPVNPKSGLYLLLTADDVYVQDFCGQVCGFHYFTFPSIVGFTLPYAWVGNSAKLCPGVCAYPFAVPAFIPGLKPVKSPNGDVGVDGMISVIAHEIAELATNPLVNAWYAGPDPVAPVEIADLCEGIYGTGGGGSYTGQMLNDHSGATYNVNGIRRRYLIQWLWSHVVSYCTGPNALD.

An N-terminal signal peptide occupies residues 1–25 (MHSLPVNLVLTVLTVFLTSPAQVIG). Residues Asn-34, Asn-66, and Asn-119 are each glycosylated (N-linked (GlcNAc...) asparagine).

Belongs to the EXORDIUM family.

It localises to the secreted. Its subcellular location is the extracellular space. It is found in the apoplast. Functionally, may play a role in a brassinosteroid-dependent regulation of growth and development. The chain is Protein EXORDIUM-like 3 (EXL3) from Arabidopsis thaliana (Mouse-ear cress).